We begin with the raw amino-acid sequence, 340 residues long: DNA-directed RNA polymerase subunit alpha (340 aa).

The tract at residues 1–233 (MIQDEIKVST…DLFIPLINSE (233 aa)) is alpha N-terminal domain (alpha-NTD). Positions 265–340 (TKDVAFKHIF…IQLPKNKNYL (76 aa)) are alpha C-terminal domain (alpha-CTD).

This sequence belongs to the RNA polymerase alpha chain family. As to quaternary structure, in plastids the minimal PEP RNA polymerase catalytic core is composed of four subunits: alpha, beta, beta', and beta''. When a (nuclear-encoded) sigma factor is associated with the core the holoenzyme is formed, which can initiate transcription.

The protein resides in the plastid. The protein localises to the chloroplast. The enzyme catalyses RNA(n) + a ribonucleoside 5'-triphosphate = RNA(n+1) + diphosphate. DNA-dependent RNA polymerase catalyzes the transcription of DNA into RNA using the four ribonucleoside triphosphates as substrates. In Marchantia polymorpha (Common liverwort), this protein is DNA-directed RNA polymerase subunit alpha.